Here is a 266-residue protein sequence, read N- to C-terminus: MAAASSTTATTAILAAVIISLAGAATTVDAKFRAMQWTPAHATFYGDETASETMGGACGYGNLYASGYGTDTAALSTTLFKDGYGCGTCYQMRCVGTASCYRGSPAITVTATNLCPPNWAEDPDRGGGGWCNPPRAHFDLSKPAFMRMADWRAGIVPVMYRRVPCARAGGLRFALQGNPYWLLAYVMNVAGAGDVGDMWVKAGGGGGWVRMSHNWGASYQAFAQLGGQALSFKVTSYTTGQTILAAGVTPASWCFGLTYQARVNFS.

An N-terminal signal peptide occupies residues 1 to 24; it reads MAAASSTTATTAILAAVIISLAGA. Residues 55–170 form the Expansin-like EG45 domain; the sequence is GGACGYGNLY…RRVPCARAGG (116 aa). Positions 180 to 261 constitute an Expansin-like CBD domain; the sequence is YWLLAYVMNV…SWCFGLTYQA (82 aa).

The protein belongs to the expansin family. Expansin A subfamily.

It is found in the secreted. Its subcellular location is the cell wall. The protein localises to the membrane. May cause loosening and extension of plant cell walls by disrupting non-covalent bonding between cellulose microfibrils and matrix glucans. No enzymatic activity has been found. May be required for rapid internodal elongation in deepwater rice during submergence. The polypeptide is Putative expansin-A30 (EXPA30) (Oryza sativa subsp. japonica (Rice)).